Here is a 78-residue protein sequence, read N- to C-terminus: NEDD8-like protein RUB3 (78 aa).

Residue Gly76 forms a Glycyl lysine isopeptide (Gly-Lys) (interchain with K-? in acceptor proteins) linkage. Positions 77–78 (CC) are excised as a propeptide.

Detected in stems and flower buds, but not in leaves, mature flowers and seedlings.

In terms of biological role, may function as a stable post-translational protein modifier. This chain is NEDD8-like protein RUB3 (RUB3), found in Arabidopsis thaliana (Mouse-ear cress).